A 152-amino-acid polypeptide reads, in one-letter code: Protein NrdI (152 aa).

The protein belongs to the NrdI family.

Its function is as follows. Probably involved in ribonucleotide reductase function. The sequence is that of Protein NrdI from Mycolicibacterium vanbaalenii (strain DSM 7251 / JCM 13017 / BCRC 16820 / KCTC 9966 / NRRL B-24157 / PYR-1) (Mycobacterium vanbaalenii).